We begin with the raw amino-acid sequence, 83 residues long: Putative membrane protein insertion efficiency factor (83 aa).

This sequence belongs to the UPF0161 family.

It localises to the cell inner membrane. In terms of biological role, could be involved in insertion of integral membrane proteins into the membrane. The polypeptide is Putative membrane protein insertion efficiency factor (Pelagibacter ubique (strain HTCC1062)).